Consider the following 465-residue polypeptide: Cysteine--tRNA ligase (465 aa).

C28 provides a ligand contact to Zn(2+). Residues 30–40 carry the 'HIGH' region motif; sequence PTVYNYIHIGN. 3 residues coordinate Zn(2+): C208, H233, and E237. Residues 265–269 carry the 'KMSKS' region motif; sequence KMSKS. Position 268 (K268) interacts with ATP.

This sequence belongs to the class-I aminoacyl-tRNA synthetase family. In terms of assembly, monomer. Zn(2+) serves as cofactor.

Its subcellular location is the cytoplasm. It carries out the reaction tRNA(Cys) + L-cysteine + ATP = L-cysteinyl-tRNA(Cys) + AMP + diphosphate. This is Cysteine--tRNA ligase from Exiguobacterium sibiricum (strain DSM 17290 / CCUG 55495 / CIP 109462 / JCM 13490 / 255-15).